The primary structure comprises 57 residues: Small ribosomal subunit protein bS21 (57 aa).

The segment at glutamine 22–lysine 57 is disordered. Basic residues predominate over residues lysine 33–lysine 57.

It belongs to the bacterial ribosomal protein bS21 family.

The sequence is that of Small ribosomal subunit protein bS21 from Natranaerobius thermophilus (strain ATCC BAA-1301 / DSM 18059 / JW/NM-WN-LF).